The sequence spans 295 residues: GATA zinc finger domain-containing protein 23 (295 aa).

A compositionally biased stretch (low complexity) spans 115-126; the sequence is ASTSKTATSKNV. The segment at 115–240 is disordered; the sequence is ASTSKTATSK…KRGRPSKIQP (126 aa). The segment covering 127–145 has biased composition (polar residues); that stretch reads ISNIENNTNKSQPLESNDL. A compositionally biased stretch (low complexity) spans 146–163; that stretch reads TPPSSKSSNSSPSTSPSK. Positions 164 to 174 are enriched in basic residues; the sequence is RVSKSKTRVTK. The segment covering 181 to 227 has biased composition (low complexity); sequence STSSSGETENLTTTSTADTTATTDTADTTDGTNTRTSNTSSDDTTTE. The segment at residues 229-241 is a DNA-binding region (a.T hook); the sequence is TKKRGRPSKIQPD. The GATA-type zinc-finger motif lies at 243–270; that stretch reads CYVCRRTFTSYWRKGIFNDQNEDLCNPC.

The polypeptide is GATA zinc finger domain-containing protein 23 (gtaW) (Dictyostelium discoideum (Social amoeba)).